Consider the following 192-residue polypeptide: U1 small nuclear ribonucleoprotein C (192 aa).

The Matrin-type zinc finger occupies tyrosine 4–glutamate 36. A disordered region spans residues proline 118–asparagine 192. Residues arginine 133–tyrosine 154 show a composition bias toward polar residues. Positions asparagine 164–asparagine 173 are enriched in low complexity. Polar residues predominate over residues tyrosine 174–asparagine 192.

It belongs to the U1 small nuclear ribonucleoprotein C family. U1 snRNP is composed of the 7 core Sm proteins B/B', D1, D2, D3, E, F and G that assemble in a heptameric protein ring on the Sm site of the small nuclear RNA to form the core snRNP, and at least 3 U1 snRNP-specific proteins U1-70K, U1-A and U1-C. U1-C interacts with U1 snRNA and the 5' splice-site region of the pre-mRNA.

The protein localises to the nucleus. Component of the spliceosomal U1 snRNP, which is essential for recognition of the pre-mRNA 5' splice-site and the subsequent assembly of the spliceosome. U1-C is directly involved in initial 5' splice-site recognition for both constitutive and regulated alternative splicing. The interaction with the 5' splice-site seems to precede base-pairing between the pre-mRNA and the U1 snRNA. Stimulates commitment or early (E) complex formation by stabilizing the base pairing of the 5' end of the U1 snRNA and the 5' splice-site region. In Plasmodium chabaudi chabaudi, this protein is U1 small nuclear ribonucleoprotein C.